A 289-amino-acid chain; its full sequence is Trihelix transcription factor GT-3b (289 aa).

In terms of domain architecture, Myb-like spans 42–98 (WSVEETKELIGIRGELDQTFMETKRNKLLWEVISNKMRDKSFPRSPEQCKCKWKNLV). Positions 65 to 81 (KRNKLLWEVISNKMRDK) match the Bipartite nuclear localization signal motif. Residues 137-200 (ESEGGGGGTS…SNSSNSNNGV (64 aa)) form a disordered region. A compositionally biased stretch (acidic residues) spans 156-168 (SDEEEENVNEELV). The Nuclear localization signal motif lies at 179–188 (PKKNIAKKRK). The segment covering 190–199 (GSNSSNSNNG) has biased composition (low complexity). A coiled-coil region spans residues 223–275 (EAREKERAEKEEEWRRKMEELEKERLAMERMWRDREEQRRSREEMRAEKRDSL).

Heterodimer with GT-3A. Associated with the mediator complex.

The protein localises to the nucleus. In terms of biological role, probable transcription factor that may play a role in the induction of CAM4 in response to pathogen and salt. The polypeptide is Trihelix transcription factor GT-3b (GT-3B) (Arabidopsis thaliana (Mouse-ear cress)).